Reading from the N-terminus, the 185-residue chain is Crossover junction endodeoxyribonuclease RuvC (185 aa).

Catalysis depends on residues aspartate 16, glutamate 75, and aspartate 147. Positions 16, 75, and 147 each coordinate Mg(2+).

This sequence belongs to the RuvC family. As to quaternary structure, homodimer which binds Holliday junction (HJ) DNA. The HJ becomes 2-fold symmetrical on binding to RuvC with unstacked arms; it has a different conformation from HJ DNA in complex with RuvA. In the full resolvosome a probable DNA-RuvA(4)-RuvB(12)-RuvC(2) complex forms which resolves the HJ. Mg(2+) is required as a cofactor.

It is found in the cytoplasm. It catalyses the reaction Endonucleolytic cleavage at a junction such as a reciprocal single-stranded crossover between two homologous DNA duplexes (Holliday junction).. Its function is as follows. The RuvA-RuvB-RuvC complex processes Holliday junction (HJ) DNA during genetic recombination and DNA repair. Endonuclease that resolves HJ intermediates. Cleaves cruciform DNA by making single-stranded nicks across the HJ at symmetrical positions within the homologous arms, yielding a 5'-phosphate and a 3'-hydroxyl group; requires a central core of homology in the junction. The consensus cleavage sequence is 5'-(A/T)TT(C/G)-3'. Cleavage occurs on the 3'-side of the TT dinucleotide at the point of strand exchange. HJ branch migration catalyzed by RuvA-RuvB allows RuvC to scan DNA until it finds its consensus sequence, where it cleaves and resolves the cruciform DNA. This chain is Crossover junction endodeoxyribonuclease RuvC, found in Aromatoleum aromaticum (strain DSM 19018 / LMG 30748 / EbN1) (Azoarcus sp. (strain EbN1)).